The chain runs to 145 residues: Large ribosomal subunit protein uL15 (145 aa).

Residues 1–13 (MNLHELKYNEGAR) show a composition bias toward basic and acidic residues. Positions 1 to 56 (MNLHELKYNEGARKEKHRVGRGHAAGKGKQAGKGQSGQLKRTGSKPGFEGGQNPWY) are disordered. Residues 14–26 (KEKHRVGRGHAAG) are compositionally biased toward basic residues.

This sequence belongs to the universal ribosomal protein uL15 family. Part of the 50S ribosomal subunit.

Binds to the 23S rRNA. This chain is Large ribosomal subunit protein uL15, found in Mycoplasma mobile (strain ATCC 43663 / 163K / NCTC 11711) (Mesomycoplasma mobile).